The following is a 131-amino-acid chain: Small ribosomal subunit protein uS9 (131 aa).

It belongs to the universal ribosomal protein uS9 family.

The sequence is that of Small ribosomal subunit protein uS9 from Mesoplasma florum (strain ATCC 33453 / NBRC 100688 / NCTC 11704 / L1) (Acholeplasma florum).